Reading from the N-terminus, the 164-residue chain is Superoxide dismutase [Cu-Zn] 3 (164 aa).

Residues His51, His53, and His68 each contribute to the Cu cation site. A disulfide bridge connects residues Cys62 and Cys151. His68, His76, His85, and Asp88 together coordinate Zn(2+). His125 lines the Cu cation pocket. Positions 162-164 (AKL) match the Peroxisome localization signal motif.

This sequence belongs to the Cu-Zn superoxide dismutase family. Homodimer. It depends on Cu cation as a cofactor. The cofactor is Zn(2+). In terms of tissue distribution, expressed in leaves (at protein level).

The protein resides in the peroxisome. It carries out the reaction 2 superoxide + 2 H(+) = H2O2 + O2. In terms of biological role, destroys radicals which are normally produced within the cells and which are toxic to biological systems. The chain is Superoxide dismutase [Cu-Zn] 3 (CSD3) from Arabidopsis thaliana (Mouse-ear cress).